Reading from the N-terminus, the 128-residue chain is Ribonuclease P protein component (128 aa).

The protein belongs to the RnpA family. Consists of a catalytic RNA component (M1 or rnpB) and a protein subunit.

It catalyses the reaction Endonucleolytic cleavage of RNA, removing 5'-extranucleotides from tRNA precursor.. Its function is as follows. RNaseP catalyzes the removal of the 5'-leader sequence from pre-tRNA to produce the mature 5'-terminus. It can also cleave other RNA substrates such as 4.5S RNA. The protein component plays an auxiliary but essential role in vivo by binding to the 5'-leader sequence and broadening the substrate specificity of the ribozyme. The chain is Ribonuclease P protein component from Chromohalobacter salexigens (strain ATCC BAA-138 / DSM 3043 / CIP 106854 / NCIMB 13768 / 1H11).